The primary structure comprises 380 residues: Cytochrome b (380 aa).

A run of 4 helical transmembrane segments spans residues S34 to M54, W78 to I99, W114 to L134, and F179 to V199. Heme b-binding residues include H84 and H98. Residues H183 and H197 each coordinate heme b. H202 is a binding site for a ubiquinone. 4 helical membrane-spanning segments follow: residues T227–F247, L289–N309, L321–S341, and Y348–I369.

Belongs to the cytochrome b family. As to quaternary structure, the main subunits of complex b-c1 are: cytochrome b, cytochrome c1 and the Rieske protein. Heme b is required as a cofactor.

It localises to the mitochondrion inner membrane. Functionally, component of the ubiquinol-cytochrome c reductase complex (complex III or cytochrome b-c1 complex) that is part of the mitochondrial respiratory chain. The b-c1 complex mediates electron transfer from ubiquinol to cytochrome c. Contributes to the generation of a proton gradient across the mitochondrial membrane that is then used for ATP synthesis. This is Cytochrome b (MT-CYB) from Strongylocentrotus purpuratus (Purple sea urchin).